The chain runs to 1168 residues: Transcription-repair-coupling factor (1168 aa).

The Helicase ATP-binding domain maps to 633 to 794 (DMQKSRPMDR…MLGVRDLSVI (162 aa)). Position 646–653 (646–653 (GDVGYGKT)) interacts with ATP. The DEEQ box motif lies at 747–750 (DEEQ). A Helicase C-terminal domain is found at 808–969 (VLEQNMSFIK…GFKIAMRDLN (162 aa)).

In the N-terminal section; belongs to the UvrB family. It in the C-terminal section; belongs to the helicase family. RecG subfamily.

The protein localises to the cytoplasm. Functionally, couples transcription and DNA repair by recognizing RNA polymerase (RNAP) stalled at DNA lesions. Mediates ATP-dependent release of RNAP and its truncated transcript from the DNA, and recruitment of nucleotide excision repair machinery to the damaged site. This chain is Transcription-repair-coupling factor, found in Staphylococcus aureus (strain USA300).